A 114-amino-acid polypeptide reads, in one-letter code: Astacin-like metalloprotease toxin 4 (114 aa).

A Peptidase M12A domain is found at 1–114 (RETNENDYVD…GLLCLFKGSV (114 aa)). The cysteines at positions 17 and 38 are disulfide-linked. Residue His46 participates in Zn(2+) binding. Residue Glu47 is part of the active site. Zn(2+) contacts are provided by His50 and His56. N-linked (GlcNAc...) asparagine glycosylation occurs at Asn88.

In terms of assembly, monomer. Zn(2+) is required as a cofactor. In terms of tissue distribution, expressed by the venom gland.

It localises to the secreted. Inhibited by 1,10-phenanthroline. In terms of biological role, zinc metalloprotease. Provoques deadhesion of endothelial cells from cell cultures, and also degradation of fibronectin, fibrinogen and gelatin in vitro. Its role in the venom is not fully understood but it might act as a spreading factor that facilitates diffusion of other venom toxins. Alternatively, it might be involved in the proteolytic processing of other venom toxins or it might play a role in extra-oral digestion of prey. The polypeptide is Astacin-like metalloprotease toxin 4 (Loxosceles laeta (South American recluse spider)).